The following is an 862-amino-acid chain: Probable linoleate 9S-lipoxygenase 5 (862 aa).

One can recognise a PLAT domain in the interval 36-161 (NDVNASLLDG…KYKSERIFFA (126 aa)). Residues 164–862 (AYLPGETPEP…GKGIPNSVSI (699 aa)) form the Lipoxygenase domain. The Fe cation site is built by His-523, His-528, His-714, Asn-718, and Ile-862.

This sequence belongs to the lipoxygenase family. As to quaternary structure, monomer. The cofactor is Fe cation. As to expression, not detected in leaves, stems, flowers, roots, tubers and stolons during normal growth and development.

The protein resides in the cytoplasm. It catalyses the reaction (9Z,12Z)-octadecadienoate + O2 = (9S)-hydroperoxy-(10E,12Z)-octadecadienoate. Its pathway is lipid metabolism; oxylipin biosynthesis. In terms of biological role, plant lipoxygenases may be involved in a number of diverse aspects of plant physiology including growth and development, pest resistance, and senescence or responses to wounding. May contribute to cell death during the hypersensitive response (HR) by the massive production of free fatty acid hydroperoxides. Catalyzes the hydroperoxidation of lipids containing a cis,cis-1,4-pentadiene structure. The chain is Probable linoleate 9S-lipoxygenase 5 (LOX1.5) from Solanum tuberosum (Potato).